The primary structure comprises 112 residues: UPF0102 protein C8J_0145 (112 aa).

Belongs to the UPF0102 family.

In Campylobacter jejuni subsp. jejuni serotype O:6 (strain 81116 / NCTC 11828), this protein is UPF0102 protein C8J_0145.